The sequence spans 102 residues: Protein PAPPAS (102 aa).

The next 2 membrane-spanning stretches (helical) occupy residues 13-33 and 82-102; these read LFLT…FVKW and IGSD…FFFF.

In terms of tissue distribution, expressed in placenta with lower expression in brain, kidney and testis.

It is found in the endoplasmic reticulum membrane. This is Protein PAPPAS (PAPPA-AS1) from Homo sapiens (Human).